The chain runs to 218 residues: ATP phosphoribosyltransferase (218 aa).

This sequence belongs to the ATP phosphoribosyltransferase family. Short subfamily. Heteromultimer composed of HisG and HisZ subunits.

The protein localises to the cytoplasm. The enzyme catalyses 1-(5-phospho-beta-D-ribosyl)-ATP + diphosphate = 5-phospho-alpha-D-ribose 1-diphosphate + ATP. The protein operates within amino-acid biosynthesis; L-histidine biosynthesis; L-histidine from 5-phospho-alpha-D-ribose 1-diphosphate: step 1/9. Catalyzes the condensation of ATP and 5-phosphoribose 1-diphosphate to form N'-(5'-phosphoribosyl)-ATP (PR-ATP). Has a crucial role in the pathway because the rate of histidine biosynthesis seems to be controlled primarily by regulation of HisG enzymatic activity. This Synechococcus elongatus (strain ATCC 33912 / PCC 7942 / FACHB-805) (Anacystis nidulans R2) protein is ATP phosphoribosyltransferase.